Reading from the N-terminus, the 330-residue chain is Probable UDP-3-O-acylglucosamine N-acyltransferase 1, mitochondrial (330 aa).

The N-terminal 52 residues, 1 to 52 (MANSLRTLFSVSTHGVFLNKRSSYRVRKVFVGMPLRICSEIPRFVSVSCIRS), are a transit peptide targeting the mitochondrion. 160-162 (FGF) contributes to the UDP-N-acetyl-alpha-D-glucosamine binding site. Hexadecanoate contacts are provided by Asp210 and Gln214. His217 functions as the Proton acceptor in the catalytic mechanism. UDP-N-acetyl-alpha-D-glucosamine contacts are provided by Asn218, Ser236, and His254.

This sequence belongs to the transferase hexapeptide repeat family. LpxD subfamily. Homotrimer.

The protein resides in the mitochondrion. The enzyme catalyses a UDP-3-O-[(3R)-3-hydroxyacyl]-alpha-D-glucosamine + a (3R)-hydroxyacyl-[ACP] = a UDP-2-N,3-O-bis[(3R)-3-hydroxyacyl]-alpha-D-glucosamine + holo-[ACP] + H(+). The protein operates within glycolipid biosynthesis; lipid IV(A) biosynthesis; lipid IV(A) from (3R)-3-hydroxytetradecanoyl-[acyl-carrier-protein] and UDP-N-acetyl-alpha-D-glucosamine: step 3/6. Its function is as follows. Involved in the biosynthesis of lipid A, a phosphorylated glycolipid that in bacteria anchors the lipopolysaccharide to the outer membrane of the cell. Lipid A-like molecules in plants may serve as structural components of the outer membranes of mitochondria and/or chloroplasts, or may be involved in signal transduction or plant defense responses. The chain is Probable UDP-3-O-acylglucosamine N-acyltransferase 1, mitochondrial (LPXD1) from Arabidopsis thaliana (Mouse-ear cress).